A 662-amino-acid polypeptide reads, in one-letter code: MTSKAVVFAYHDIGCTGIEALLNAGYEIAAVFTHADDPRENTFYASVARLCAERGIPLHAPEDVNHPLWLERIRQLRPDFLFSFYYRRLLGAELLACAARGAYNLHGSLLPRYRGRAPANWVLVNGETQTGVTLHRMIERADAGPILAQQAVAIDPEDTALSLHGKLRKAAGALLRDSLPLLALGVLPEVEQDESQASHFGRRTPADGLLDWHRPARQLYDLVRAVTQPYPGAFCQVGEQKLIVWSAEVVAGNHGREPGSVLSCDPLRIACGEDSLVLRFGQRGERGLYLAGTQLATELGLVEGARLRGAASGPQRRTRVLILGVNGFIGNHLSERLLRDGRYEVHGMDIGSDAIERLKADPHFHFVEGDIGIHSEWLEYHVKKCDVVLPLVAIATPIEYTRNPLRVFELDFEENLRIVRYCVKYGKRVVFPSTSEVYGMCQDPDFDEDRSNLVVGPINKQRWIYSVSKQLLDRVIWAYGQQGLRFTLFRPFNWMGPRLDRLDSARIGSSRAITQLILHLVEGTPIRLVDGGAQKRCFTDVDDGIEALARIIDNRDGRCDGQIVNIGNPDNEASIRQLGEELLRQFEAHPLRAQFPPFAGFREVESRSFYGDGYQDVAHRKPSIDNARRLLDWQPTIELRETIGKTLDFFLHEALREREAQA.

Residues 1 to 307 are formyltransferase ArnAFT; the sequence is MTSKAVVFAY…ELGLVEGARL (307 aa). His-106 serves as the catalytic Proton donor; for formyltransferase activity. Residues Arg-116 and 138–142 each bind (6R)-10-formyltetrahydrofolate; that span reads IERAD. The dehydrogenase ArnADH stretch occupies residues 316 to 662; it reads RRTRVLILGV…EALREREAQA (347 aa). Residues Asp-349 and 370-371 contribute to the NAD(+) site; that span reads DI. Residues Ala-395, Tyr-400, and 434–435 each bind UDP-alpha-D-glucuronate; that span reads TS. Glu-436 functions as the Proton acceptor; for decarboxylase activity in the catalytic mechanism. UDP-alpha-D-glucuronate is bound by residues Arg-462, Asn-493, 527-536, and Tyr-614; that span reads RLVDGGAQKR. Catalysis depends on Arg-620, which acts as the Proton donor; for decarboxylase activity.

The protein in the N-terminal section; belongs to the Fmt family. UDP-L-Ara4N formyltransferase subfamily. This sequence in the C-terminal section; belongs to the NAD(P)-dependent epimerase/dehydratase family. UDP-glucuronic acid decarboxylase subfamily. As to quaternary structure, homohexamer, formed by a dimer of trimers.

It carries out the reaction UDP-alpha-D-glucuronate + NAD(+) = UDP-beta-L-threo-pentopyranos-4-ulose + CO2 + NADH. The enzyme catalyses UDP-4-amino-4-deoxy-beta-L-arabinose + (6R)-10-formyltetrahydrofolate = UDP-4-deoxy-4-formamido-beta-L-arabinose + (6S)-5,6,7,8-tetrahydrofolate + H(+). It participates in nucleotide-sugar biosynthesis; UDP-4-deoxy-4-formamido-beta-L-arabinose biosynthesis; UDP-4-deoxy-4-formamido-beta-L-arabinose from UDP-alpha-D-glucuronate: step 1/3. It functions in the pathway nucleotide-sugar biosynthesis; UDP-4-deoxy-4-formamido-beta-L-arabinose biosynthesis; UDP-4-deoxy-4-formamido-beta-L-arabinose from UDP-alpha-D-glucuronate: step 3/3. Its pathway is bacterial outer membrane biogenesis; lipopolysaccharide biosynthesis. Functionally, bifunctional enzyme that catalyzes the oxidative decarboxylation of UDP-glucuronic acid (UDP-GlcUA) to UDP-4-keto-arabinose (UDP-Ara4O) and the addition of a formyl group to UDP-4-amino-4-deoxy-L-arabinose (UDP-L-Ara4N) to form UDP-L-4-formamido-arabinose (UDP-L-Ara4FN). The modified arabinose is attached to lipid A and is required for resistance to polymyxin and cationic antimicrobial peptides. In Pseudomonas aeruginosa (strain UCBPP-PA14), this protein is Bifunctional polymyxin resistance protein ArnA.